Reading from the N-terminus, the 227-residue chain is Cytidylate kinase (227 aa).

10–18 (GPSGSGKGT) is an ATP binding site.

It belongs to the cytidylate kinase family. Type 1 subfamily.

The protein resides in the cytoplasm. The catalysed reaction is CMP + ATP = CDP + ADP. The enzyme catalyses dCMP + ATP = dCDP + ADP. The polypeptide is Cytidylate kinase (Acinetobacter baylyi (strain ATCC 33305 / BD413 / ADP1)).